We begin with the raw amino-acid sequence, 212 residues long: MSNKDTSILKGNVDHEEADSNPKLRKIGRPPALRIIPPLNFCPVERQLYRSGQPSAINQSFLEQLNLKTILWLASEEPQDDFLEFSNDHNINIEFVGIINEFSNYQNYNTNQTLTVNPWDALNEQTIKRALELIVNRENYPLLVCCGMGRHRTGTVIGCLRRLQGWNLASVSEEYRRFTGARGGRILVELLIESFDIGSVEIDPSKVPDWLT.

Residues 1–27 (MSNKDTSILKGNVDHEEADSNPKLRKI) form a disordered region. The segment covering 12-22 (NVDHEEADSNP) has biased composition (basic and acidic residues). The region spanning 40–208 (NFCPVERQLY…SVEIDPSKVP (169 aa)) is the Tyrosine-protein phosphatase domain. C146 (phosphocysteine intermediate) is an active-site residue.

The protein belongs to the protein-tyrosine phosphatase family.

It localises to the cytoplasm. It catalyses the reaction O-phospho-L-tyrosyl-[protein] + H2O = L-tyrosyl-[protein] + phosphate. Functionally, putative tyrosine-protein phosphatase required for protection against superoxide stress. The polypeptide is Putative tyrosine-protein phosphatase OCA1 (OCA1) (Scheffersomyces stipitis (strain ATCC 58785 / CBS 6054 / NBRC 10063 / NRRL Y-11545) (Yeast)).